Reading from the N-terminus, the 185-residue chain is MVRYAATPANPAKSASARGSYLRVSFKNTRETAQAINGWKLEKAQKYLDQVLDHQRAIPFRRYNSSIGRTGQGKEFGVTKARWPAKSVNFVKDLLRNAQANAEAKGLDSSKLVISHIQVNHAPKQRRRTYRAHGRINAYQSTPSHIELTLTEEDEIVEKPVEQKQIRLNSRQRGRLASQKRLTAA.

It belongs to the universal ribosomal protein uL22 family. As to quaternary structure, component of the large ribosomal subunit. Mature ribosomes consist of a small (40S) and a large (60S) subunit. The 40S subunit contains about 32 different proteins and 1 molecule of RNA (18S). The 60S subunit contains 45 different proteins and 3 molecules of RNA (25S, 5.8S and 5S).

It localises to the cytoplasm. Component of the ribosome, a large ribonucleoprotein complex responsible for the synthesis of proteins in the cell. The small ribosomal subunit (SSU) binds messenger RNAs (mRNAs) and translates the encoded message by selecting cognate aminoacyl-transfer RNA (tRNA) molecules. The large subunit (LSU) contains the ribosomal catalytic site termed the peptidyl transferase center (PTC), which catalyzes the formation of peptide bonds, thereby polymerizing the amino acids delivered by tRNAs into a polypeptide chain. The nascent polypeptides leave the ribosome through a tunnel in the LSU and interact with protein factors that function in enzymatic processing, targeting, and the membrane insertion of nascent chains at the exit of the ribosomal tunnel. The polypeptide is Large ribosomal subunit protein uL22 (Candida albicans (strain SC5314 / ATCC MYA-2876) (Yeast)).